Reading from the N-terminus, the 326-residue chain is Acetyl-coenzyme A carboxylase carboxyl transferase subunit beta (326 aa).

The CoA carboxyltransferase N-terminal domain maps to 29–298 (LWIKCEACGT…TLISDESLET (270 aa)). Zn(2+)-binding residues include Cys-33, Cys-36, Cys-52, and Cys-55. The C4-type zinc finger occupies 33–55 (CEACGTLTYTKDLQANQMVCPEC). Residues 302–326 (CHLPFQAESHNLSTTDNKIQPTPQG) are disordered. A compositionally biased stretch (polar residues) spans 309-326 (ESHNLSTTDNKIQPTPQG).

Belongs to the AccD/PCCB family. In terms of assembly, acetyl-CoA carboxylase is a heterohexamer composed of biotin carboxyl carrier protein (AccB), biotin carboxylase (AccC) and two subunits each of ACCase subunit alpha (AccA) and ACCase subunit beta (AccD). Zn(2+) serves as cofactor.

The protein resides in the cytoplasm. The enzyme catalyses N(6)-carboxybiotinyl-L-lysyl-[protein] + acetyl-CoA = N(6)-biotinyl-L-lysyl-[protein] + malonyl-CoA. It functions in the pathway lipid metabolism; malonyl-CoA biosynthesis; malonyl-CoA from acetyl-CoA: step 1/1. Component of the acetyl coenzyme A carboxylase (ACC) complex. Biotin carboxylase (BC) catalyzes the carboxylation of biotin on its carrier protein (BCCP) and then the CO(2) group is transferred by the transcarboxylase to acetyl-CoA to form malonyl-CoA. This is Acetyl-coenzyme A carboxylase carboxyl transferase subunit beta from Trichodesmium erythraeum (strain IMS101).